The primary structure comprises 353 residues: Phosphate acyltransferase (353 aa).

Belongs to the PlsX family. In terms of assembly, homodimer. Probably interacts with PlsY.

It localises to the cytoplasm. It catalyses the reaction a fatty acyl-[ACP] + phosphate = an acyl phosphate + holo-[ACP]. Its pathway is lipid metabolism; phospholipid metabolism. Its function is as follows. Catalyzes the reversible formation of acyl-phosphate (acyl-PO(4)) from acyl-[acyl-carrier-protein] (acyl-ACP). This enzyme utilizes acyl-ACP as fatty acyl donor, but not acyl-CoA. The polypeptide is Phosphate acyltransferase (Rhodopseudomonas palustris (strain BisB18)).